The primary structure comprises 451 residues: MTSQPTSSLQGSCSICFEDLKQNDKISAIVCGHIYHHGCISQWIATKRQCPSCRRTVPKNGFVEKLFFDVQRMGGEAEKPPEIDYREEHYKLSTSLKVEQEKLGTLNTENKNLKDTVKSLEKKIIREKDKYRQEIPKLQATINHLTISSEETAYLKRELQESKNRLKTCEFYKILTVHSSEADKQLGEYLKKNGNLDTEKFFQLMKSTNKDLTDKRREAAKEIEQLKMEVQSLKRAAQEDAAIKKTLKKTVLDLRERANVDTPINNKRLRDVLETETPPPAKRKSMGFDESSQMIDPDGELSFFKQNENRTPVTSVPSTSKAVLPFNFDDDEDDEYFKTPKIAEKKKKLPEAMAPVSEDSFDFDIAVPQSIINRIPAKTTAQPAKKYPKIPNLSAKTSSKPTEAPKTENVLKIKSKSQEIAQKPQKSTRISSFFSRTTSSTSNLTEYVILD.

The RING-type; atypical zinc-finger motif lies at 13 to 54; sequence CSICFEDLKQNDKISAIVCGHIYHHGCISQWIATKRQCPSCR. 2 coiled-coil regions span residues 96 to 130 and 209 to 243; these read LKVE…EKDK and NKDL…DAAI. Disordered regions lie at residues 270-297 and 389-442; these read RDVL…MIDP and KIPN…SSTS. Residues 427–442 are compositionally biased toward low complexity; the sequence is STRISSFFSRTTSSTS.

This sequence belongs to the TRAIP family.

It localises to the nucleus. The protein localises to the chromosome. The enzyme catalyses S-ubiquitinyl-[E2 ubiquitin-conjugating enzyme]-L-cysteine + [acceptor protein]-L-lysine = [E2 ubiquitin-conjugating enzyme]-L-cysteine + N(6)-ubiquitinyl-[acceptor protein]-L-lysine.. It participates in protein modification; protein ubiquitination. Functionally, E3 ubiquitin ligase that acts as a key regulator of DNA repair in response to replication stress. Acts by mediating ubiquitination of the CMG helicase complex, promoting the unloading of the CMG helicase complex by the p97 ATPase (cdc-48.1 or cdc-48.2). This is E3 ubiquitin-protein ligase trul-1 from Caenorhabditis elegans.